The following is a 326-amino-acid chain: MVLTDLYGRPVLSLRIQLNTTCNFNCFFCHMEGTEISGEALKPEEIERVVKIAHKFGVNKIKLTGGEPTLRRDLIDIVKRIRKYITGNISMTTNGVMLPILAYELKKAGLDRVNISMHAFDEDTFQAITGVNSRDRIIKAIDAANEAGLTPVKINFVVLRDLNVDQIPDMIELAAEKHAILQLIEYETTREGESSKEYLKYHMPLDSLEKEIADKALSIERNELHNRPRYIIRTQAGEVKVEFVKPQRNPDFCAHCTRLRITSEGEFKTCLMRSDTNVKFKGINDEKTISELFRQAVLRREPYWRPGDEVRQNEVLAKSIIQNKRK.

The 230-residue stretch at 6-235 (LYGRPVLSLR…NRPRYIIRTQ (230 aa)) folds into the Radical SAM core domain. Arginine 15 lines the GTP pocket. Positions 22, 26, and 29 each coordinate [4Fe-4S] cluster. Lysine 62 lines the GTP pocket. Glycine 66 is a binding site for S-adenosyl-L-methionine. Threonine 92 is a binding site for GTP. An S-adenosyl-L-methionine-binding site is contributed by serine 116. Residue lysine 153 coordinates GTP. [4Fe-4S] cluster-binding residues include cysteine 253 and cysteine 256. 258 to 260 (RLR) serves as a coordination point for GTP. Position 270 (cysteine 270) interacts with [4Fe-4S] cluster.

This sequence belongs to the radical SAM superfamily. MoaA family. The cofactor is [4Fe-4S] cluster.

The enzyme catalyses GTP + AH2 + S-adenosyl-L-methionine = (8S)-3',8-cyclo-7,8-dihydroguanosine 5'-triphosphate + 5'-deoxyadenosine + L-methionine + A + H(+). It participates in cofactor biosynthesis; molybdopterin biosynthesis. In terms of biological role, catalyzes the cyclization of GTP to (8S)-3',8-cyclo-7,8-dihydroguanosine 5'-triphosphate. The sequence is that of Probable GTP 3',8-cyclase from Thermoplasma volcanium (strain ATCC 51530 / DSM 4299 / JCM 9571 / NBRC 15438 / GSS1).